Consider the following 375-residue polypeptide: Elongation factor Tu (375 aa).

The 196-residue stretch at 10–205 (KPHINVGAIG…TMDKYFVIPE (196 aa)) folds into the tr-type G domain. A G1 region spans residues 19–26 (GHVDHGKT). 19 to 26 (GHVDHGKT) provides a ligand contact to GTP. Residue Thr26 participates in Mg(2+) binding. A G2 region spans residues 60-64 (GITIN). The interval 81–84 (DCPG) is G3. Residues 81-85 (DCPGH) and 136-139 (NKMD) each bind GTP. The tract at residues 136–139 (NKMD) is G4. Positions 173-175 (SAF) are G5.

It belongs to the TRAFAC class translation factor GTPase superfamily. Classic translation factor GTPase family. EF-Tu/EF-1A subfamily. As to quaternary structure, monomer.

The protein resides in the cytoplasm. It carries out the reaction GTP + H2O = GDP + phosphate + H(+). Functionally, GTP hydrolase that promotes the GTP-dependent binding of aminoacyl-tRNA to the A-site of ribosomes during protein biosynthesis. The sequence is that of Elongation factor Tu (tuf) from Spirochaeta aurantia.